The chain runs to 183 residues: Ribosome maturation factor RimM (183 aa).

Residues 95 to 171 form the PRC barrel domain; it reads DPDEFYDHEL…VVVIDPPEGL (77 aa).

Belongs to the RimM family. As to quaternary structure, binds ribosomal protein uS19.

The protein localises to the cytoplasm. An accessory protein needed during the final step in the assembly of 30S ribosomal subunit, possibly for assembly of the head region. Essential for efficient processing of 16S rRNA. May be needed both before and after RbfA during the maturation of 16S rRNA. It has affinity for free ribosomal 30S subunits but not for 70S ribosomes. This chain is Ribosome maturation factor RimM, found in Rhodococcus opacus (strain B4).